The primary structure comprises 643 residues: Threonine--tRNA ligase 1 (643 aa).

The TGS domain maps to 3 to 64 (DMVKITFPDG…NEDGTVEIIT (62 aa)). Positions 245–542 (DHRKLGKELK…LIEEHKGALP (298 aa)) are catalytic. Residues cysteine 338, histidine 389, and histidine 519 each coordinate Zn(2+).

It belongs to the class-II aminoacyl-tRNA synthetase family. In terms of assembly, homodimer. The cofactor is Zn(2+).

Its subcellular location is the cytoplasm. It carries out the reaction tRNA(Thr) + L-threonine + ATP = L-threonyl-tRNA(Thr) + AMP + diphosphate + H(+). Its function is as follows. Catalyzes the attachment of threonine to tRNA(Thr) in a two-step reaction: L-threonine is first activated by ATP to form Thr-AMP and then transferred to the acceptor end of tRNA(Thr). Also edits incorrectly charged L-seryl-tRNA(Thr). The chain is Threonine--tRNA ligase 1 (thrS) from Bacillus subtilis (strain 168).